Consider the following 343-residue polypeptide: Olfactory receptor 6K6 (343 aa).

The Extracellular portion of the chain corresponds to 1 to 53; sequence MKQYSVGNQHSNYRSLLFPFLCSQMTQLTASGNQTMVTEFLFSMFPHAHRGGL. N-linked (GlcNAc...) asparagine glycosylation is present at N33. A helical membrane pass occupies residues 54 to 74; sequence LFFIPLLLIYGFILTGNLIMF. Topologically, residues 75–82 are cytoplasmic; it reads IVIQVGMA. Residues 83–103 traverse the membrane as a helical segment; it reads LHTPLYFFISVLSFLEICYTT. Topologically, residues 104–127 are extracellular; the sequence is TTIPKMLSCLISEQKSISVAGCLL. C125 and C217 form a disulfide bridge. Residues 128–148 form a helical membrane-spanning segment; it reads QMYFFHSLGITESCVLTAMAI. Over 149–167 the chain is Cytoplasmic; sequence DRYIAICNPLRYPTIMIPK. Residues 168-188 traverse the membrane as a helical segment; sequence LCIQLTVGSCFCGFLLVLPEI. The Extracellular segment spans residues 189-224; it reads AWISTLPFCGSNQIHQIFCDFTPVLSLACTDTFLVV. Residues 225-244 traverse the membrane as a helical segment; sequence IVDAIHAAEIVASFLVIALS. Topologically, residues 245–264 are cytoplasmic; the sequence is YIRIIIVILGMHSAEGHHKA. Residues 265 to 285 form a helical membrane-spanning segment; sequence FSTCAAHLAVFLLFFGSVAVM. Over 286 to 298 the chain is Extracellular; that stretch reads YLRFSATYSVFWD. Residues 299-319 traverse the membrane as a helical segment; the sequence is TAIAVTFVILAPFFNPIIYSL. Over 320-343 the chain is Cytoplasmic; that stretch reads KNKDMKEAIGRLFHYQKRAGWAGK.

The protein belongs to the G-protein coupled receptor 1 family.

Its subcellular location is the cell membrane. In terms of biological role, odorant receptor. In Homo sapiens (Human), this protein is Olfactory receptor 6K6 (OR6K6).